Reading from the N-terminus, the 172-residue chain is Small ribosomal subunit protein uS5 (172 aa).

In terms of domain architecture, S5 DRBM spans 17–80 (LREKMISVNR…EQARRNMFKV (64 aa)).

It belongs to the universal ribosomal protein uS5 family. Part of the 30S ribosomal subunit. Contacts proteins S4 and S8.

Functionally, with S4 and S12 plays an important role in translational accuracy. In terms of biological role, located at the back of the 30S subunit body where it stabilizes the conformation of the head with respect to the body. The sequence is that of Small ribosomal subunit protein uS5 from Paraburkholderia phymatum (strain DSM 17167 / CIP 108236 / LMG 21445 / STM815) (Burkholderia phymatum).